A 93-amino-acid chain; its full sequence is Peptide YY-like (93 aa).

The N-terminal stretch at 1-27 (MVSPRVRLAALALSVCAILCLGMHASA) is a signal peptide. Y63 is subject to Tyrosine amide. The propeptide at 65–93 (KRALTPENWIYRDPAEERVTYGLDDYAMW) is C-terminal extension.

This sequence belongs to the NPY family. As to expression, gut and medial reticulospinal neuron system in the brainstem.

The protein resides in the secreted. In terms of biological role, gastrointestinal hormone and neuropeptide. This is Peptide YY-like (pyy) from Lampetra fluviatilis (European river lamprey).